Reading from the N-terminus, the 208-residue chain is Calcyphosin-like protein (208 aa).

EF-hand domains are found at residues 39-74 (AGIKGLGRVFRIMDDNNNRTLDFKEFLKGLNDYAVV), 75-110 (MEKEEAEELFQRFDRDGSGTIDFNEFLLTLRPPMSR), 111-146 (ARKEVIMKAFRKLDKTGDGVITIEDLREVYNAKHHP), and 154-191 (TEEQVFRKFLDNFDSPYDKDGLVTPEEFMNYYAGVSAS). Aspartate 52, asparagine 54, asparagine 56, threonine 58, glutamate 63, aspartate 88, aspartate 90, serine 92, threonine 94, and glutamate 99 together coordinate Ca(2+).

The protein localises to the cytoplasm. This is Calcyphosin-like protein (Capsl) from Mus musculus (Mouse).